The primary structure comprises 72 residues: DNA gyrase inhibitor YacG (72 aa).

Zn(2+) contacts are provided by C17, C20, C32, and C36. Residues 52 to 72 (PGPEEDEMSYPPHSNDGNRSR) are disordered.

Belongs to the DNA gyrase inhibitor YacG family. Interacts with GyrB. Zn(2+) is required as a cofactor.

Functionally, inhibits all the catalytic activities of DNA gyrase by preventing its interaction with DNA. Acts by binding directly to the C-terminal domain of GyrB, which probably disrupts DNA binding by the gyrase. This chain is DNA gyrase inhibitor YacG, found in Methylorubrum extorquens (strain CM4 / NCIMB 13688) (Methylobacterium extorquens).